We begin with the raw amino-acid sequence, 936 residues long: Protein translocase subunit SecA (936 aa).

Residues Gln-87, 105–109 (GEGKT), and Asp-515 each bind ATP. Zn(2+)-binding residues include Cys-920, Cys-922, Cys-931, and His-932.

This sequence belongs to the SecA family. Monomer and homodimer. Part of the essential Sec protein translocation apparatus which comprises SecA, SecYEG and auxiliary proteins SecDF-YajC and YidC. Requires Zn(2+) as cofactor.

The protein localises to the cell inner membrane. The protein resides in the cytoplasm. The enzyme catalyses ATP + H2O + cellular proteinSide 1 = ADP + phosphate + cellular proteinSide 2.. Its function is as follows. Part of the Sec protein translocase complex. Interacts with the SecYEG preprotein conducting channel. Has a central role in coupling the hydrolysis of ATP to the transfer of proteins into and across the cell membrane, serving both as a receptor for the preprotein-SecB complex and as an ATP-driven molecular motor driving the stepwise translocation of polypeptide chains across the membrane. The chain is Protein translocase subunit SecA from Paraburkholderia phymatum (strain DSM 17167 / CIP 108236 / LMG 21445 / STM815) (Burkholderia phymatum).